Reading from the N-terminus, the 256-residue chain is Proteasome subunit alpha-type 8 (256 aa).

The protein belongs to the peptidase T1A family. As to quaternary structure, component of the outer alpha-ring of the 20S proteasome core which is composed of 28 subunits that are arranged in four stacked rings, resulting in a barrel-shaped structure. The catalytic chamber with the active sites is on the inside of the barrel. Interacts with canonical subunits of the spermatoproteasome, including proteasome activators PSME4 (also called PA200) and PSME3 (also called PA28-gamma). Interacts with proteasome-interacting proteins chaperones, ubiquitin ligases and ubiquitin specific proteases. Interacts with meiotic proteins cyclin dependent kinase CDK1 and the ATPase TRIP13 as well as proteins of the synaptonemal complex SIX6OS1 and SYCE3.

The protein localises to the nucleus. Its function is as follows. Component of the spermatoproteasome, a proteasome specifically found in testis that promotes acetylation-dependent degradation of histones, thereby participating actively to the exchange of histones during spermatogenesis. The proteasome is a protein complex that degrades unneeded or damaged proteins by proteolysis, a chemical reaction that breaks peptide bonds. Required for 20S core proteasome assembly, essential for the degradation of meiotic proteins RAD51 and RPA1 at late prophase I and the progression of meiosis I during spermatogenesis. Localizes to the synaptonemal complex, a 'zipper'-like structure that holds homologous chromosome pairs in synapsis during meiotic prophase I. In Homo sapiens (Human), this protein is Proteasome subunit alpha-type 8 (PSMA8).